Reading from the N-terminus, the 725-residue chain is MTLAMAEQIATADNPAFVVVSDAAGRMRIQIEWVRSNPRRAVTVEEAIAKCNGVRVVHAYPRTGSVVVWYSPRCCDRQSILAAISGAAHVAAELIPTRAPHSSDIRNIEVLRMAIGAAALTLLGVRRYVFARPLLLPTTSRLVASGVTIFTGYPFLRGALRFGKTGTDALVSVATIASLILRENVVALAVLWLLNIGEYLQDLTLRRTRRAISALLSGTQDTAWIRLTDGPQAGTEIQVPIGTVQIGDEVVVHEHVAIPVDGEVIDGEAVVNQSAITGENLPVSVMAGSHVHAGSVVVRGRLMVRASAVGKHTTIGRIVTRVEEAQHDRAPIQTVGENFSRCFVPTSFVVSAITLAITKDVRRTMTVLLIACPCAVGLATPTAISAAIGNGARRGILIKGGSHLEQAGRVDAILFDKTGTLTVGRPVVTNIVAMHKDWSPEQVLAYAASSEIHSRHPLAEAVIRSTEERHISIPPHEECEVLVGLGMRTWADGRTLLLGSPSLLCAEKVKVSKTASEWVDKLRHQTETPLLFAVDGTLVGLISLRDEVRPEAAEVLTKLRASGVRRIVMLTGDHPDIAKAVATELGIDEWRAEVMPEDKLKVVRDLQNEGYVVGMVGDGVNDAPALAAADIGIAMGLAGTDVAVETADVALANDDLNRLLDVRDLGGRAVEVIRENYGMSIAVNAAGLFIGAGGALSPVLAAVLHNASSVAVVANSSRLIRYRLD.

The 68-residue stretch at 25–92 (GRMRIQIEWV…AISGAAHVAA (68 aa)) folds into the HMA domain. 6 helical membrane passes run 101–119 (HSSDIRNIEVLRMAIGAAA), 142–160 (LVASGVTIFTGYPFLRGAL), 165–179 (TGTDALVSVATIASL), 188–202 (LAVLWLLNIGEYLQD), 335–359 (VGENFSRCFVPTSFVVSAITLAITK), and 365–383 (MTVLLIACPCAVGLATPTA). The 4-aspartylphosphate intermediate role is filled by Asp416. The Mg(2+) site is built by Asp416, Thr418, and Asp618. Transmembrane regions (helical) follow at residues 669–688 (AVEVIRENYGMSIAVNAAGL) and 698–717 (PVLAAVLHNASSVAVVANSS).

Belongs to the cation transport ATPase (P-type) (TC 3.A.3) family. Type IB subfamily.

It localises to the cell membrane. The catalysed reaction is Mn(2+)(in) + ATP + H2O = Mn(2+)(out) + ADP + phosphate + H(+). Functionally, high affinity, slow turnover Mn(2+) transporting ATPase. The polypeptide is Manganese-exporting P-type ATPase (ctpC) (Mycobacterium leprae (strain TN)).